The primary structure comprises 122 residues: Large ribosomal subunit protein uL14 (122 aa).

Belongs to the universal ribosomal protein uL14 family. As to quaternary structure, part of the 50S ribosomal subunit. Forms a cluster with proteins L3 and L19. In the 70S ribosome, L14 and L19 interact and together make contacts with the 16S rRNA in bridges B5 and B8.

Binds to 23S rRNA. Forms part of two intersubunit bridges in the 70S ribosome. The polypeptide is Large ribosomal subunit protein uL14 (Nitrosospira multiformis (strain ATCC 25196 / NCIMB 11849 / C 71)).